A 99-amino-acid polypeptide reads, in one-letter code: NADH-quinone oxidoreductase subunit K (99 aa).

The next 3 membrane-spanning stretches (helical) occupy residues Pro-3–Leu-23, Ile-28–Phe-48, and Met-59–Ile-79.

This sequence belongs to the complex I subunit 4L family. NDH-1 is composed of 14 different subunits. Subunits NuoA, H, J, K, L, M, N constitute the membrane sector of the complex.

The protein resides in the cell membrane. The catalysed reaction is a quinone + NADH + 5 H(+)(in) = a quinol + NAD(+) + 4 H(+)(out). Functionally, NDH-1 shuttles electrons from NADH, via FMN and iron-sulfur (Fe-S) centers, to quinones in the respiratory chain. The immediate electron acceptor for the enzyme in this species is believed to be a menaquinone. Couples the redox reaction to proton translocation (for every two electrons transferred, four hydrogen ions are translocated across the cytoplasmic membrane), and thus conserves the redox energy in a proton gradient. The polypeptide is NADH-quinone oxidoreductase subunit K (Mycobacterium marinum (strain ATCC BAA-535 / M)).